The sequence spans 314 residues: Ribosome maturation factor RimP (314 aa).

Disordered stretches follow at residues 1–20 (MDLD…QPLS), 152–176 (PIEA…AKPE), and 206–314 (AAKA…PAPK). The segment covering 10–19 (PSAQVGQQPL) has biased composition (polar residues). Acidic residues predominate over residues 215–227 (DGNNEEQDEEQEE). A compositionally biased stretch (polar residues) spans 247–256 (PEHNPAQNPI). Basic and acidic residues-rich tracts occupy residues 270–279 (TEFKKSKTGE) and 303–314 (SGHDMPRKPAPK).

It belongs to the RimP family.

The protein resides in the cytoplasm. Functionally, required for maturation of 30S ribosomal subunits. In Beijerinckia indica subsp. indica (strain ATCC 9039 / DSM 1715 / NCIMB 8712), this protein is Ribosome maturation factor RimP.